Consider the following 87-residue polypeptide: MRLQKGLYYISLQVCVDITMDVVAMLVKDIGLNVEDDYTNIKKLLKHDVITKDEATLLKQYNRLRNAIVHKYDKIKLRSCKRRFKKN.

Active-site residues include arginine 65 and histidine 70. Positions 65 to 72 (RNAIVHKY) match the RX(4)HXY motif motif. At tyrosine 72 the chain carries O-di-AMP-tyrosine.

The protein belongs to the HepT RNase toxin family. As to quaternary structure, homodimer, probably forms a complex with cognate antitoxin MJ1547. Post-translationally, modified by cognate antitoxin MJ1547; probably at least 2 successive AMPylation events occur on Tyr-72.

Probable toxic component of a putative type VII toxin-antitoxin (TA) system, probably an RNase. Probably neutralized by cognate antitoxin MJ1547. Neutralization may be due to AMPylation by antitoxin MJ1547. This is Putative RNase MJ1548 from Methanocaldococcus jannaschii (strain ATCC 43067 / DSM 2661 / JAL-1 / JCM 10045 / NBRC 100440) (Methanococcus jannaschii).